The following is a 280-amino-acid chain: S-methyl-5'-thioadenosine phosphorylase (280 aa).

Phosphate is bound by residues Ser18, 60–61, and 93–94; these read RH and TA. Met196 is a binding site for substrate. Position 197 (Thr197) interacts with phosphate. A substrate-binding site is contributed by 220–222; that stretch reads DYD.

This sequence belongs to the PNP/MTAP phosphorylase family. MTAP subfamily. Homotrimer.

It localises to the cytoplasm. The protein localises to the nucleus. It carries out the reaction S-methyl-5'-thioadenosine + phosphate = 5-(methylsulfanyl)-alpha-D-ribose 1-phosphate + adenine. It functions in the pathway amino-acid biosynthesis; L-methionine biosynthesis via salvage pathway; S-methyl-5-thio-alpha-D-ribose 1-phosphate from S-methyl-5'-thioadenosine (phosphorylase route): step 1/1. Its function is as follows. Catalyzes the reversible phosphorylation of S-methyl-5'-thioadenosine (MTA) to adenine and 5-methylthioribose-1-phosphate. Involved in the breakdown of MTA, a major by-product of polyamine biosynthesis. Responsible for the first step in the methionine salvage pathway after MTA has been generated from S-adenosylmethionine. Has broad substrate specificity with 6-aminopurine nucleosides as preferred substrates. The polypeptide is S-methyl-5'-thioadenosine phosphorylase (Ciona intestinalis (Transparent sea squirt)).